The chain runs to 187 residues: Adenylate kinase (187 aa).

11-16 (GAGKGT) is a binding site for ATP. The segment at 31 to 60 (STGDILREAVKNQTPMGIEAKRYMDAGDLV) is NMP. AMP-binding positions include threonine 32, arginine 37, 58-60 (DLV), 86-89 (GFPR), and glutamine 93. Positions 127 to 137 (GRAEIEGRADD) are LID. An ATP-binding site is contributed by arginine 128. Arginine 134 and arginine 145 together coordinate AMP. ATP is bound at residue glycine 173.

It belongs to the adenylate kinase family. In terms of assembly, monomer.

Its subcellular location is the cytoplasm. It carries out the reaction AMP + ATP = 2 ADP. Its pathway is purine metabolism; AMP biosynthesis via salvage pathway; AMP from ADP: step 1/1. Its function is as follows. Catalyzes the reversible transfer of the terminal phosphate group between ATP and AMP. Plays an important role in cellular energy homeostasis and in adenine nucleotide metabolism. In Leptospira borgpetersenii serovar Hardjo-bovis (strain JB197), this protein is Adenylate kinase.